We begin with the raw amino-acid sequence, 67 residues long: V-type proton ATPase subunit e (67 aa).

Topologically, residues 1–2 are lumenal; the sequence is MG. A helical transmembrane segment spans residues 3–23; that stretch reads GLVVLLVGLLTALMSVVSYYV. At 24–35 the chain is on the cytoplasmic side; that stretch reads SPKGNNTSTWQM. The helical transmembrane segment at 36–56 threads the bilayer; that stretch reads SLILTFSCCYLLWAITYLAQL. Residues 57 to 67 lie on the Lumenal side of the membrane; the sequence is HPLEAPSRVLE.

It belongs to the V-ATPase e1/e2 subunit family. V-ATPase is a heteromultimeric enzyme composed of a peripheral catalytic V1 complex (components A to H) attached to an integral membrane V0 proton pore complex (components: a, c, c', c'', d, e, f and VOA1).

Its subcellular location is the vacuole membrane. In terms of biological role, subunit of the V0 complex of vacuolar(H+)-ATPase (V-ATPase), a multisubunit enzyme composed of a peripheral complex (V1) that hydrolyzes ATP and a membrane integral complex (V0) that translocates protons. V-ATPase is responsible for acidifying and maintaining the pH of intracellular compartments. The chain is V-type proton ATPase subunit e (vma9) from Schizosaccharomyces pombe (strain 972 / ATCC 24843) (Fission yeast).